The primary structure comprises 183 residues: Neuronal synaptobrevin (183 aa).

Over residues 1–17 (MADAAPAGDAPPNAGAP) the composition is skewed to low complexity. A disordered region spans residues 1-32 (MADAAPAGDAPPNAGAPAGEGGDGEIVGGPHN). The Cytoplasmic segment spans residues 1–106 (MADAAPAGDA…KFWLQNLKMM (106 aa)). The span at 18–27 (AGEGGDGEIV) shows a compositional bias: gly residues. One can recognise a v-SNARE coiled-coil homology domain in the interval 41 to 101 (RLQQTQAQVD…GKLKRKFWLQ (61 aa)). The chain crosses the membrane as a helical span at residues 107-127 (IIMGVIGLVVVGIIANKLGLI). At 128–183 (GGEQPPQYQYPPQYMQPPPPPPQQPAGGQSSLVDAAGAGDGAGAGGSAGAGDHGGV) the chain is on the vesicular side. The disordered stretch occupies residues 135-183 (YQYPPQYMQPPPPPPQQPAGGQSSLVDAAGAGDGAGAGGSAGAGDHGGV). Pro residues predominate over residues 141–151 (YMQPPPPPPQQ). A compositionally biased stretch (gly residues) spans 165-183 (AGDGAGAGGSAGAGDHGGV).

Belongs to the synaptobrevin family. As to quaternary structure, part of the SNARE core complex containing Snap25 and syntaxin. Specifically expressed in neurons and synapses.

The protein localises to the cytoplasmic vesicle. It is found in the secretory vesicle. Its subcellular location is the synaptic vesicle membrane. It localises to the early endosome membrane. Involved in the targeting and/or fusion of transport vesicles to their target membrane. Major SNARE protein of synaptic vesicles which mediates fusion of synaptic vesicles to release neurotransmitters. Essential for fast vesicular exocytosis and activity-dependent neurotransmitter release as well as fast endocytosis that mediates rapid reuse of synaptic vesicles. Also involved in a neuron-specific sort-and-degrade mechanism that promotes endolysosomal degradation and is required for neuronal maintenance. The protein is Neuronal synaptobrevin of Drosophila melanogaster (Fruit fly).